The chain runs to 775 residues: Major facilitator superfamily domain-containing protein 6 (775 aa).

Threonine 11 carries the phosphothreonine modification. A disordered region spans residues 28 to 47; that stretch reads NGICREPEPPSNETPSSTET. The span at 38–47 shows a compositional bias: low complexity; sequence SNETPSSTET. 12 consecutive transmembrane segments (helical) span residues 74–94, 106–126, 133–153, 289–309, 338–358, 372–392, 453–473, 482–502, 510–530, 547–567, 582–602, and 608–628; these read VFYFFFYSAYGSLYPLLPVYY, LLVGIRYFIEFCSAPFWGVVA, KIVLLFSLLCWVLFNLGIGFV, AIFLIILVVVIIGEFFSASSV, WGLAMLSVGIGIDYTHIDVLI, QIVFIVFGVLMTMALIVATQF, VLFVAWFMGFGYGFVFTFLYW, TTLFGVCSVLSHVSELTAYFF, IGHIRVLYIGLACNTARYIYI, GVTHAAIWAACISYLSAAVPP, LGLGRGCGAMIGGVLVNYFGA, and GIGMACLVILLLFALIQWLAV.

This sequence belongs to the major facilitator superfamily. MFSD6 family.

It is found in the membrane. Functionally, MHC class I receptor. Binds only to H-2 class I histocompatibility antigen, K-D alpha chain (H-2K(D)). This Mus musculus (Mouse) protein is Major facilitator superfamily domain-containing protein 6 (Mfsd6).